We begin with the raw amino-acid sequence, 238 residues long: Large ribosomal subunit protein uL3 (238 aa).

This sequence belongs to the universal ribosomal protein uL3 family. In terms of assembly, part of the 50S ribosomal subunit. Forms a cluster with proteins L14 and L19.

Functionally, one of the primary rRNA binding proteins, it binds directly near the 3'-end of the 23S rRNA, where it nucleates assembly of the 50S subunit. The sequence is that of Large ribosomal subunit protein uL3 from Mesoplasma florum (strain ATCC 33453 / NBRC 100688 / NCTC 11704 / L1) (Acholeplasma florum).